Reading from the N-terminus, the 461-residue chain is MSSCALVQRPPPWRAAVAPGDGMVAVDGTQFVVDCGRTIFFSGFNAYWLMMMAADPALRGAVATAFQQASAHGLNLARTWAFSDGGDQPLQSSPGVYNETMFQGLDFVIAEARRHGIYLLLCLTNNFDNFGGKRQYVRWAGDAGHNLTSDDDFFTSTIVKSYFKNHVKTVLTRVNTLTGVAYKDDPTIFAWELMNEPRCYADPTGAMVQAWVEEMAPYVKSVDGRHLVTPGLEGFYGAGEHESKELNPWGIYYGTNYVATHRTAAVDFATIHLYPDVWLWGSSADEQATFFRNWTRSHIDATAAYLGMPLLVTEYGKFLWKEVGANKAQRNYFLDLVLDAIYASASRGGPLVGGAFWQLLLDGDIVAGMDSLRDGYEIILAEDSRAASIIGEHSEQLAALNGQDADVLCRRASSHRRTRLGNSLSCGGGDTLELLLRMVLACFVSLSRSISSFIVQNFILL.

Positions 80 and 195 each coordinate substrate. The active-site Proton donor is the Glu-196. Tyr-274 provides a ligand contact to substrate. Glu-314 serves as the catalytic Nucleophile. Positions 357 and 364 each coordinate substrate.

This sequence belongs to the glycosyl hydrolase 5 (cellulase A) family. Ubiquitous.

It carries out the reaction Random hydrolysis of (1-&gt;4)-beta-D-mannosidic linkages in mannans, galactomannans and glucomannans.. This is Mannan endo-1,4-beta-mannosidase 4 (MAN4) from Oryza sativa subsp. japonica (Rice).